The primary structure comprises 444 residues: tRNA (guanine-N(7)-)-methyltransferase non-catalytic subunit TRM82 (444 aa).

WD repeat units lie at residues 1-47 (MSVI…WSDD), 48-99 (FDKI…LGAP), 100-147 (PIYS…KRFC), 148-192 (FSKR…EPIL), 193-237 (GHVS…DKWL), 238-279 (FGHK…STFD), and 308-354 (FAVS…ITFP). The segment at 55–92 (RNTTAKEQQGQSSENENENKKLKSNKGDSIKRTAAKVP) is disordered. Residues 71–85 (NENKKLKSNKGDSIK) show a composition bias toward basic and acidic residues. Ser-93 is modified (phosphoserine).

Belongs to the WD repeat TRM82 family. In terms of assembly, forms a heterodimer with the catalytic subunit TRM8.

It localises to the nucleus. It functions in the pathway tRNA modification; N(7)-methylguanine-tRNA biosynthesis. Required for the formation of N(7)-methylguanine at position 46 (m7G46) in tRNA, a modification required to maintain stability of tRNAs; its absence resulting in tRNA decay. In the complex, it is required to stabilize and induce conformational changes of the catalytic subunit. The chain is tRNA (guanine-N(7)-)-methyltransferase non-catalytic subunit TRM82 from Saccharomyces cerevisiae (strain RM11-1a) (Baker's yeast).